Reading from the N-terminus, the 177-residue chain is Transcription antitermination protein NusB (177 aa).

The disordered stretch occupies residues 1-35; that stretch reads MTDSTHPTPSARPPRQPRTGTTGTGARKAGSKSGR. The span at 17–28 shows a compositional bias: low complexity; the sequence is PRTGTTGTGARK.

The protein belongs to the NusB family.

Its function is as follows. Involved in transcription antitermination. Required for transcription of ribosomal RNA (rRNA) genes. Binds specifically to the boxA antiterminator sequence of the ribosomal RNA (rrn) operons. This is Transcription antitermination protein NusB from Acidovorax sp. (strain JS42).